The sequence spans 106 residues: ATP-dependent Clp protease adapter protein ClpS (106 aa).

Belongs to the ClpS family. Binds to the N-terminal domain of the chaperone ClpA.

Functionally, involved in the modulation of the specificity of the ClpAP-mediated ATP-dependent protein degradation. This Escherichia coli O139:H28 (strain E24377A / ETEC) protein is ATP-dependent Clp protease adapter protein ClpS.